The primary structure comprises 257 residues: DNA repair protein RecO (257 aa).

Belongs to the RecO family.

In terms of biological role, involved in DNA repair and RecF pathway recombination. The sequence is that of DNA repair protein RecO from Streptococcus sanguinis (strain SK36).